Reading from the N-terminus, the 405-residue chain is MKRTVIMMLDSFGVGAAKDAEAFGDTGSNTFGHIAKACAEGKANDGREGPLKLPNLAKLGLALAAKESTGSFAEGFGDDVEVIGAYGHADELSSGKDTPSGHWEMAGVPVLYEWGYFSDLKDSFPKELTDKILERAGLSGFLGNCHASGTAILEELGEEHMTSGLPIFYTSADSVFQIACHEETFGLENLYTLCQIAREELEPYNIGRVIARPFVGTGPSDFARTGNRKDYAVEPPSKTVLDKLKEAGGEVVSVGKIADIYAHCGITKKVKATGLEALFDATLEQVKQAGDRTIVFTNFVDFDSHYGHRRDIAGYARALEYFDSRLPEMLALLGEEDLLLLTADHGCDPTWQGTDHTRERVPVLAYGAGLAPGSLGRRNSFADIGQSIASYFGLEPMEYGESFVA.

Mn(2+)-binding residues include Asp10, Asp303, His308, Asp344, His345, and His356.

This sequence belongs to the phosphopentomutase family. The cofactor is Mn(2+).

The protein resides in the cytoplasm. The catalysed reaction is 2-deoxy-alpha-D-ribose 1-phosphate = 2-deoxy-D-ribose 5-phosphate. It carries out the reaction alpha-D-ribose 1-phosphate = D-ribose 5-phosphate. Its pathway is carbohydrate degradation; 2-deoxy-D-ribose 1-phosphate degradation; D-glyceraldehyde 3-phosphate and acetaldehyde from 2-deoxy-alpha-D-ribose 1-phosphate: step 1/2. Its function is as follows. Isomerase that catalyzes the conversion of deoxy-ribose 1-phosphate (dRib-1-P) and ribose 1-phosphate (Rib-1-P) to deoxy-ribose 5-phosphate (dRib-5-P) and ribose 5-phosphate (Rib-5-P), respectively. This is Phosphopentomutase from Shewanella loihica (strain ATCC BAA-1088 / PV-4).